The primary structure comprises 335 residues: Beta-ketoacyl-[acyl-carrier-protein] synthase III (335 aa).

Residues Cys-119 and His-261 contribute to the active site. The ACP-binding stretch occupies residues 262–266; it reads QANQR. Asn-291 is an active-site residue.

It belongs to the thiolase-like superfamily. FabH family. As to quaternary structure, homodimer.

The protein resides in the cytoplasm. The catalysed reaction is malonyl-[ACP] + acetyl-CoA + H(+) = 3-oxobutanoyl-[ACP] + CO2 + CoA. Its pathway is lipid metabolism; fatty acid biosynthesis. Functionally, catalyzes the condensation reaction of fatty acid synthesis by the addition to an acyl acceptor of two carbons from malonyl-ACP. Catalyzes the first condensation reaction which initiates fatty acid synthesis and may therefore play a role in governing the total rate of fatty acid production. Possesses both acetoacetyl-ACP synthase and acetyl transacylase activities. Its substrate specificity determines the biosynthesis of branched-chain and/or straight-chain of fatty acids. This Prochlorococcus marinus subsp. pastoris (strain CCMP1986 / NIES-2087 / MED4) protein is Beta-ketoacyl-[acyl-carrier-protein] synthase III.